Consider the following 250-residue polypeptide: DNA repair protein RecO (250 aa).

It belongs to the RecO family.

Involved in DNA repair and RecF pathway recombination. In Thermodesulfovibrio yellowstonii (strain ATCC 51303 / DSM 11347 / YP87), this protein is DNA repair protein RecO.